The chain runs to 349 residues: D-arabinose 1-dehydrogenase (NADP(+)) (349 aa).

The Zn(2+) site is built by Cys-46, His-70, Asp-99, Cys-102, Cys-105, Cys-113, and Asp-155.

This sequence belongs to the zinc-containing alcohol dehydrogenase family. Homotetramer. Dimer of dimers. The cofactor is Zn(2+).

It carries out the reaction D-arabinose + NADP(+) = D-arabinono-1,4-lactone + NADPH + H(+). Participates in a pentose oxidation pathway that converts D-arabinose to 2-oxoglutarate. Catalyzes the NADP-dependent conversion of D-arabinose to D-arabinono-1,4-lactone. In vitro, can also use L-fucose, L-galactose and D-ribose. Shows highest activity with L-fucose, in combinaison with NAD, and lower activity toward L-galactose and D-ribose. When acting on its physiological substrate, D-arabinose, shows a clear preference for NADP over NAD. The sequence is that of D-arabinose 1-dehydrogenase (NADP(+)) from Saccharolobus solfataricus (strain ATCC 35092 / DSM 1617 / JCM 11322 / P2) (Sulfolobus solfataricus).